The primary structure comprises 461 residues: Chromosomal replication initiator protein DnaA (461 aa).

The interval 1–84 (MAVSLWQQCI…RFDIGSRPSA (84 aa)) is domain I, interacts with DnaA modulators. The segment at 84 to 124 (AKKFEPAPVATVRAPNTQTKATVGTYFNTQAEPIANANHRS) is domain II. The domain III, AAA+ region stretch occupies residues 125–341 (NINPTYQFDN…GALNRVIANA (217 aa)). Positions 169, 171, 172, and 173 each coordinate ATP. The domain IV, binds dsDNA stretch occupies residues 342-461 (NFTGRPITID…YANLIRTLSS (120 aa)).

It belongs to the DnaA family. In terms of assembly, oligomerizes as a right-handed, spiral filament on DNA at oriC.

The protein resides in the cytoplasm. Its function is as follows. Plays an essential role in the initiation and regulation of chromosomal replication. ATP-DnaA binds to the origin of replication (oriC) to initiate formation of the DNA replication initiation complex once per cell cycle. Binds the DnaA box (a 9 base pair repeat at the origin) and separates the double-stranded (ds)DNA. Forms a right-handed helical filament on oriC DNA; dsDNA binds to the exterior of the filament while single-stranded (ss)DNA is stabiized in the filament's interior. The ATP-DnaA-oriC complex binds and stabilizes one strand of the AT-rich DNA unwinding element (DUE), permitting loading of DNA polymerase. After initiation quickly degrades to an ADP-DnaA complex that is not apt for DNA replication. Binds acidic phospholipids. This Shewanella putrefaciens (strain CN-32 / ATCC BAA-453) protein is Chromosomal replication initiator protein DnaA.